We begin with the raw amino-acid sequence, 453 residues long: Sensor histidine kinase CpxA (453 aa).

Topologically, residues 1–4 are cytoplasmic; sequence MTAR. Residues 5–25 form a helical membrane-spanning segment; it reads IFAIFWLTLALVLMLVLMLPK. The Periplasmic segment spans residues 26–159; it reads LDSRQMTELL…SDFINLLFDR (134 aa). A helical transmembrane segment spans residues 160–180; it reads PLLLLIVTMLVSAPLLLWLAW. Positions 180 to 233 constitute an HAMP domain; it reads WSLAKPARKLKNAADEVAQGNLRQHPELEAGPQEFLAAGASFNQMVTALERMMT. At 181-453 the chain is on the cytoplasmic side; the sequence is SLAKPARKLK…TIWLPLYKRT (273 aa). Residues 241 to 451 form the Histidine kinase domain; the sequence is DISHELRTPL…RLTIWLPLYK (211 aa). Histidine 244 serves as the catalytic Nucleophile. Phosphohistidine; by autocatalysis is present on histidine 244. Residues 244 to 247, 355 to 360, aspartate 382, 401 to 402, and 412 to 417 each bind ATP; these read HELR, RNALRY, RT, and GTGLGL.

Interacts with cognate response regulator CpxR.

The protein localises to the cell inner membrane. The enzyme catalyses ATP + protein L-histidine = ADP + protein N-phospho-L-histidine.. The two-component system is activated by envelope stress such as overexpression of some (misfolded) periplasmic proteins. Functionally, histidine kinase member of the two-component regulatory system CpxA/CpxR which responds to envelope stress response by activating or, in some cases, repressing expression of downstream genes. Activates CpxR by phosphorylation. The protein is Sensor histidine kinase CpxA of Klebsiella pneumoniae subsp. pneumoniae (strain HS11286).